Consider the following 314-residue polypeptide: Ferrochelatase (314 aa).

Residues H184 and E259 each coordinate Fe cation.

Belongs to the ferrochelatase family.

It localises to the cytoplasm. The enzyme catalyses heme b + 2 H(+) = protoporphyrin IX + Fe(2+). It functions in the pathway porphyrin-containing compound metabolism; protoheme biosynthesis; protoheme from protoporphyrin-IX: step 1/1. Functionally, catalyzes the ferrous insertion into protoporphyrin IX. The chain is Ferrochelatase from Chlamydia trachomatis serovar A (strain ATCC VR-571B / DSM 19440 / HAR-13).